The sequence spans 98 residues: Gibberellin-regulated protein 1 (98 aa).

A signal peptide spans 1–23 (MAISKALIASLLISLLVLQLVQA).

Belongs to the GASA family. Post-translationally, six disulfide bonds may be present. As to expression, expressed in flower buds, style, stamen filaments, vasculature of sepals, flower abscission zone and green siliques. Lower levels seen in the root phloem, cotyledons and vasculature of rosette leaves.

Its subcellular location is the secreted. Its function is as follows. Gibberellin-regulated protein that may function in hormonal controlled steps of development such as seed germination, flowering and seed maturation. This is Gibberellin-regulated protein 1 (GASA1) from Arabidopsis thaliana (Mouse-ear cress).